Consider the following 236-residue polypeptide: LexA repressor (236 aa).

The segment at 1-25 (MNDSNDTSVAGGAAGADSRVLSADS) is disordered. The segment at residues 51–71 (IREIGDAVGLTSTSSVAHQLR) is a DNA-binding region (H-T-H motif). Active-site for autocatalytic cleavage activity residues include serine 160 and lysine 197.

The protein belongs to the peptidase S24 family. As to quaternary structure, homodimer.

It carries out the reaction Hydrolysis of Ala-|-Gly bond in repressor LexA.. Its function is as follows. Represses a number of genes involved in the response to DNA damage (SOS response), including recA and lexA. In the presence of single-stranded DNA, RecA interacts with LexA causing an autocatalytic cleavage which disrupts the DNA-binding part of LexA, leading to derepression of the SOS regulon and eventually DNA repair. This chain is LexA repressor, found in Mycobacterium bovis (strain BCG / Pasteur 1173P2).